Reading from the N-terminus, the 185-residue chain is ATP synthase subunit delta (185 aa).

It belongs to the ATPase delta chain family. In terms of assembly, F-type ATPases have 2 components, F(1) - the catalytic core - and F(0) - the membrane proton channel. F(1) has five subunits: alpha(3), beta(3), gamma(1), delta(1), epsilon(1). CF(0) has four main subunits: a(1), b(1), b'(1) and c(10-14). The alpha and beta chains form an alternating ring which encloses part of the gamma chain. F(1) is attached to F(0) by a central stalk formed by the gamma and epsilon chains, while a peripheral stalk is formed by the delta, b and b' chains.

Its subcellular location is the cellular thylakoid membrane. In terms of biological role, f(1)F(0) ATP synthase produces ATP from ADP in the presence of a proton or sodium gradient. F-type ATPases consist of two structural domains, F(1) containing the extramembraneous catalytic core and F(0) containing the membrane proton channel, linked together by a central stalk and a peripheral stalk. During catalysis, ATP synthesis in the catalytic domain of F(1) is coupled via a rotary mechanism of the central stalk subunits to proton translocation. Functionally, this protein is part of the stalk that links CF(0) to CF(1). It either transmits conformational changes from CF(0) to CF(1) or is implicated in proton conduction. The complex from the organism is particularly stable to disruption and remains functional after 6 hrs at 55 degrees Celsius. The protein is ATP synthase subunit delta of Thermosynechococcus vestitus (strain NIES-2133 / IAM M-273 / BP-1).